The following is a 1084-amino-acid chain: Cellulose synthase A catalytic subunit 2 [UDP-forming] (1084 aa).

Methionine 1 is modified (N-acetylmethionine). Topologically, residues 1-278 (MNTGGRLIAG…RSSRINPYRM (278 aa)) are cytoplasmic. Zn(2+) contacts are provided by cysteine 39, cysteine 42, cysteine 58, cysteine 61, cysteine 66, cysteine 69, cysteine 81, and cysteine 84. The RING-type; degenerate zinc-finger motif lies at 39 to 85 (CQICGDEIELTVSSELFVACNECAFPVCRPCYEYERREGNQACPQCK). Positions 230 to 259 (IKHEGGNNGRGSNDDDELDDPDMPMMDEGR) are disordered. The helical transmembrane segment at 279-299 (LILCRLAILGLFFHYRILHPV) threads the bilayer. The Extracellular portion of the chain corresponds to 300 to 301 (ND). The chain crosses the membrane as a helical span at residues 302–322 (AYGLWLTSVICEIWFAVSWIL). Residues 323–867 (DQFPKWYPIE…INSVVYPWTS (545 aa)) are Cytoplasmic-facing. Residues serine 361, lysine 367, glutamate 368, and aspartate 397 each coordinate UDP-alpha-D-glucose. Aspartate 397 is a catalytic residue. Residues 451–477 (VRERRAMKRDYEEFKVKINALVATAQK) are a coiled coil. Lysine 538 is a UDP-alpha-D-glucose binding site. Mn(2+)-binding residues include lysine 539 and aspartate 563. Aspartate 784 is an active-site residue. A helical membrane pass occupies residues 868 to 888 (LPLIVYCSLPAVCLLTGKFIV). The Extracellular segment spans residues 889 to 893 (PEISN). The chain crosses the membrane as a helical span at residues 894 to 914 (YAGILFMLMFISIAVTGILEM). Over 915-929 (QWGGVGIDDWWRNEQ) the chain is Cytoplasmic. Residues 930–950 (FWVIGGASSHLFALFQGLLKV) form a helical membrane-spanning segment. Over 951-979 (LAGVNTNFTVTSKAADDGAFSELYIFKWT) the chain is Extracellular. A glycan (N-linked (GlcNAc...) asparagine) is linked at asparagine 957. Residues 980 to 1000 (TLLIPPTTLLIINIIGVIVGV) traverse the membrane as a helical segment. Residues 1001-1011 (SDAISNGYDSW) are Cytoplasmic-facing. A helical transmembrane segment spans residues 1012 to 1032 (GPLFGRLFFALWVIVHLYPFL). The Extracellular portion of the chain corresponds to 1033 to 1041 (KGMLGKQDK). The chain crosses the membrane as a helical span at residues 1042-1062 (MPTIIVVWSILLASILTLLWV). At 1063–1084 (RVNPFVAKGGPVLEICGLNCGN) the chain is on the cytoplasmic side.

The protein belongs to the glycosyltransferase 2 family. Plant cellulose synthase subfamily. As to quaternary structure, homodimer. Interaction through zinc finger domain. The cofactor is Mn(2+). Requires Zn(2+) as cofactor. Strongly and ubiquitously expressed. Localized in some dividing and expanding cells, as well as in vascular tissues.

It localises to the cell membrane. The enzyme catalyses [(1-&gt;4)-beta-D-glucosyl](n) + UDP-alpha-D-glucose = [(1-&gt;4)-beta-D-glucosyl](n+1) + UDP + H(+). The protein operates within glycan metabolism; plant cellulose biosynthesis. In terms of biological role, catalytic subunit of cellulose synthase terminal complexes ('rosettes'), required for beta-1,4-glucan microfibril crystallization, a major mechanism of the cell wall formation. Involved in the primary cell wall formation. This is Cellulose synthase A catalytic subunit 2 [UDP-forming] from Arabidopsis thaliana (Mouse-ear cress).